The sequence spans 359 residues: Peptide chain release factor 1 (359 aa).

An N5-methylglutamine modification is found at glutamine 235. The segment covering serine 283–lysine 294 has biased composition (basic and acidic residues). Positions serine 283–tyrosine 309 are disordered.

The protein belongs to the prokaryotic/mitochondrial release factor family. Post-translationally, methylated by PrmC. Methylation increases the termination efficiency of RF1.

It localises to the cytoplasm. Functionally, peptide chain release factor 1 directs the termination of translation in response to the peptide chain termination codons UAG and UAA. The chain is Peptide chain release factor 1 from Mesorhizobium japonicum (strain LMG 29417 / CECT 9101 / MAFF 303099) (Mesorhizobium loti (strain MAFF 303099)).